A 330-amino-acid polypeptide reads, in one-letter code: L-lactate dehydrogenase (330 aa).

Residues valine 31, aspartate 52, lysine 57, and 96–97 contribute to the NAD(+) site; that span reads GA. Residues glutamine 99, arginine 105, and 137–140 each bind substrate; that span reads NPVD. NAD(+) contacts are provided by residues 135–137 and serine 160; that span reads VSN. 165–168 is a binding site for substrate; the sequence is DTAR. The beta-D-fructose 1,6-bisphosphate site is built by arginine 170 and histidine 185. The active-site Proton acceptor is histidine 192. Phosphotyrosine is present on tyrosine 238. Threonine 247 contributes to the substrate binding site.

The protein belongs to the LDH/MDH superfamily. LDH family. In terms of assembly, homotetramer.

The protein resides in the cytoplasm. It catalyses the reaction (S)-lactate + NAD(+) = pyruvate + NADH + H(+). The protein operates within fermentation; pyruvate fermentation to lactate; (S)-lactate from pyruvate: step 1/1. With respect to regulation, allosterically activated by fructose 1,6-bisphosphate (FBP). Catalyzes the conversion of lactate to pyruvate. The protein is L-lactate dehydrogenase of Gloeobacter violaceus (strain ATCC 29082 / PCC 7421).